The chain runs to 318 residues: Cobalamin biosynthesis protein CobD (318 aa).

The next 5 membrane-spanning stretches (helical) occupy residues 51-71 (VGGVLLLLLAVGITAGAAWGA), 77-97 (LVHPLAGVVVSALLGWTCLAA), 153-173 (DGVIAPLLFFMIGGAPLALAY), 206-226 (LIPARLTGLLMTLAAPLAGLS), and 296-316 (MYGAECLLVLLAAVMTTILTI).

The protein belongs to the CobD/CbiB family.

The protein resides in the cell membrane. It participates in cofactor biosynthesis; adenosylcobalamin biosynthesis. Converts cobyric acid to cobinamide by the addition of aminopropanol on the F carboxylic group. The sequence is that of Cobalamin biosynthesis protein CobD from Geobacter metallireducens (strain ATCC 53774 / DSM 7210 / GS-15).